Here is a 175-residue protein sequence, read N- to C-terminus: Coagulogen (175 aa).

8 disulfide bridges follow: C8–C167, C10–C95, C60–C161, C65–C121, C75–C168, C88–C140, C127–C170, and C134–C172.

The protein belongs to the coagulin family. Coagulogen is cleaved after Arg-18 and Arg-46 by a clotting enzyme contained in the hemocyte and activated by a bacterial endotoxin (lipopolysaccharide). This cleavage releases the peptide C and leaves 2 chains of coagulin, A and B, linked by two disulfide bonds. Coagulin molecules interlink to form a gel. As to expression, hemolymph.

It localises to the secreted. In terms of biological role, coagulogen is a gel-forming protein of hemolymph; it hinders the spread of invaders by immobilizing them. The chain is Coagulogen from Carcinoscorpius rotundicauda (Mangrove horseshoe crab).